We begin with the raw amino-acid sequence, 565 residues long: Wee1-like protein kinase 2 (565 aa).

Disordered regions lie at residues 18–78 and 169–191; these read YCEE…KSPE and KSNGKRKTRGDFEEAGPGEGNVE. The segment covering 19-29 has biased composition (acidic residues); that stretch reads CEEESESEGQE. The span at 31–51 shows a compositional bias: basic and acidic residues; the sequence is WETRDAHSQIPDRAEGQESEA. The residue at position 76 (serine 76) is a Phosphoserine. The Nuclear localization signal motif lies at 173-175; that stretch reads KRK. A Protein kinase domain is found at 214-492; the sequence is FLEVEKIGVG…ARSRVLRPSL (279 aa). Residues 220-228 and lysine 243 each bind ATP; that span reads IGVGEFGTV. Residues 317-331 carry the Nuclear export signal motif; that stretch reads KLKDILLQISLGLKY. The active-site Proton acceptor is aspartate 341. Residues asparagine 346 and aspartate 382 each contribute to the Mg(2+) site. Residues 495-521 are a coiled coil; that stretch reads AEELQQQLNLEKFKTATLERELREAQQ. Residues 521–565 are disordered; the sequence is QAWFSQEERGDAGVSGTPTGSRSTKRLVGGKSAKSSSFTWGKSSP. A compositionally biased stretch (polar residues) spans 553–565; it reads AKSSSFTWGKSSP.

It belongs to the protein kinase superfamily. Ser/Thr protein kinase family. WEE1 subfamily. In terms of processing, phosphorylation leads to increase its activity.

The protein resides in the nucleus. The catalysed reaction is L-tyrosyl-[protein] + ATP = O-phospho-L-tyrosyl-[protein] + ADP + H(+). Oocyte-specific protein tyrosine kinase that phosphorylates and inhibits CDK1 and acts as a key regulator of meiosis during both prophase I and metaphase II. Required to maintain meiotic arrest in oocytes during the germinal vesicle (GV) stage, a long period of quiescence at dictyate prophase I, by phosphorylating CDK1 at 'Tyr-15', leading to inhibit CDK1 activity and prevent meiotic reentry. Also required for metaphase II exit during egg activation by phosphorylating CDK1 at 'Tyr-15', to ensure exit from meiosis in oocytes and promote pronuclear formation. This chain is Wee1-like protein kinase 2 (WEE2), found in Ailuropoda melanoleuca (Giant panda).